Here is a 110-residue protein sequence, read N- to C-terminus: Large ribosomal subunit protein uL22 (110 aa).

The protein belongs to the universal ribosomal protein uL22 family. As to quaternary structure, part of the 50S ribosomal subunit.

Functionally, this protein binds specifically to 23S rRNA; its binding is stimulated by other ribosomal proteins, e.g. L4, L17, and L20. It is important during the early stages of 50S assembly. It makes multiple contacts with different domains of the 23S rRNA in the assembled 50S subunit and ribosome. Its function is as follows. The globular domain of the protein is located near the polypeptide exit tunnel on the outside of the subunit, while an extended beta-hairpin is found that lines the wall of the exit tunnel in the center of the 70S ribosome. The polypeptide is Large ribosomal subunit protein uL22 (Aliarcobacter butzleri (strain RM4018) (Arcobacter butzleri)).